A 134-amino-acid polypeptide reads, in one-letter code: MGSSRGESFGNFVDRIPMKMQPPGAQAETRVSSLLQRQGWQLLDRNWSCRWGELDLVLHKNEQLLVVEVKKRRSLAWGPWSVDPTKRRRLGRAISCWRAEHPIQTDWLLQVAVAVVPLPPSQGAPRWCRLDRLC.

Belongs to the UPF0102 family.

This chain is UPF0102 protein SYNW1051, found in Parasynechococcus marenigrum (strain WH8102).